Here is a 643-residue protein sequence, read N- to C-terminus: Threonine--tRNA ligase (643 aa).

A TGS domain is found at 1 to 61 (MIKVSLKDGS…NEDVSLSICT (61 aa)). The tract at residues 240–540 (DHNKLGRELK…LIEKYAGAFP (301 aa)) is catalytic. The Zn(2+) site is built by C335, H386, and H517.

This sequence belongs to the class-II aminoacyl-tRNA synthetase family. Homodimer. The cofactor is Zn(2+).

It localises to the cytoplasm. It catalyses the reaction tRNA(Thr) + L-threonine + ATP = L-threonyl-tRNA(Thr) + AMP + diphosphate + H(+). Catalyzes the attachment of threonine to tRNA(Thr) in a two-step reaction: L-threonine is first activated by ATP to form Thr-AMP and then transferred to the acceptor end of tRNA(Thr). Also edits incorrectly charged L-seryl-tRNA(Thr). The polypeptide is Threonine--tRNA ligase (Clostridium botulinum (strain Alaska E43 / Type E3)).